We begin with the raw amino-acid sequence, 252 residues long: Protein lin-28 homolog B (252 aa).

Positions M1–V30 are disordered. Positions G9–E19 are enriched in basic and acidic residues. The CSD domain maps to L32–P105. CCHC-type zinc fingers lie at residues D130–L147 and K152–H169. Residues C132, C135, H140, C145, C154, C157, H162, and C167 each coordinate Zn(2+). Residues V172 to K252 form a disordered region. The segment covering G213–S222 has biased composition (basic and acidic residues). Polar residues predominate over residues P225–E238.

Belongs to the lin-28 family.

It localises to the nucleus. Its subcellular location is the nucleolus. Its function is as follows. Suppressor of specific microRNA (miRNA) biogenesis. Binds target primary miRNA transcripts and sequester them in the nucleolus, away from the microprocessor complex, hence preventing their processing into mature miRNA. The specific interaction with target pri-miRNAs occurs via an 5'-GGAG-3' motif in the pre-miRNA terminal loop. The chain is Protein lin-28 homolog B (lin28b) from Xenopus laevis (African clawed frog).